The chain runs to 374 residues: Succinyl-diaminopimelate desuccinylase (374 aa).

Residue His66 participates in Zn(2+) binding. Residue Asp68 is part of the active site. A Zn(2+)-binding site is contributed by Asp99. The Proton acceptor role is filled by Glu133. Zn(2+)-binding residues include Glu134, Glu162, and His348.

This sequence belongs to the peptidase M20A family. DapE subfamily. Homodimer. The cofactor is Zn(2+). Co(2+) is required as a cofactor.

The catalysed reaction is N-succinyl-(2S,6S)-2,6-diaminopimelate + H2O = (2S,6S)-2,6-diaminopimelate + succinate. The protein operates within amino-acid biosynthesis; L-lysine biosynthesis via DAP pathway; LL-2,6-diaminopimelate from (S)-tetrahydrodipicolinate (succinylase route): step 3/3. Its function is as follows. Catalyzes the hydrolysis of N-succinyl-L,L-diaminopimelic acid (SDAP), forming succinate and LL-2,6-diaminopimelate (DAP), an intermediate involved in the bacterial biosynthesis of lysine and meso-diaminopimelic acid, an essential component of bacterial cell walls. In Coxiella burnetii (strain RSA 331 / Henzerling II), this protein is Succinyl-diaminopimelate desuccinylase.